We begin with the raw amino-acid sequence, 156 residues long: Inner membrane protein YlaC (156 aa).

At 1–35 (MTEIQRLLTETIESLNTREKRDNKPRFSISFIRKH) the chain is on the cytoplasmic side. The chain crosses the membrane as a helical span at residues 36 to 56 (PGLFIGMYVAFFATLAVMLQS). Topologically, residues 57–58 (ET) are periplasmic. A helical membrane pass occupies residues 59 to 79 (LSGSVWLLVVLFILLNGFFFF). Residues 80-156 (DVYPRYRYED…FTLARAESTS (77 aa)) are Cytoplasmic-facing.

It localises to the cell inner membrane. The sequence is that of Inner membrane protein YlaC (ylaC) from Escherichia coli (strain K12).